The chain runs to 630 residues: Terpinolene synthase, chloroplastic (630 aa).

Residues 1 to 52 constitute a chloroplast transit peptide; sequence MALVSILPLSSKSVLHKSWIVSTYEHKAISRTIPNLGLRGRGKSVTHSLRMS. Mg(2+) is bound by residues D381, D385, N525, and D533. The DDXXD motif signature appears at 381 to 385; the sequence is DDIYD.

This sequence belongs to the terpene synthase family. Tpsd subfamily. It depends on Mg(2+) as a cofactor. Mn(2+) is required as a cofactor. K(+) serves as cofactor.

It localises to the plastid. The protein localises to the chloroplast. It carries out the reaction (2E)-geranyl diphosphate = terpinolene + diphosphate. It functions in the pathway terpene metabolism; oleoresin biosynthesis. Involved in defensive oleoresin formation in conifers in response to insect attack or other injury. Involved in monoterpene (C10) olefins biosynthesis. This is Terpinolene synthase, chloroplastic (ag9) from Abies grandis (Grand fir).